The primary structure comprises 538 residues: MARAAALLPSRSPPTPLLWPLLLLLLLETGAQDVRVQVLPEVRGQLGGTVELPCHLLPPVPGLYISLVTWQRPDAPANHQNVAAFHPKMGPSFPSPKPGSERLSFVSAKQSTGQDTEAELQDATLALHGLTVEDEGNYTCEFATFPKGSVRGMTWLRVIAKPKNQAEAQKVTFSQDPTTVALCISKEGRPPARISWLSSLDWEAKETQVSGTLAGTVTVTSRFTLVPSGRADGVTVTCKVEHESFEEPALIPVTLSVRYPPEVSISGYDDNWYLGRTDATLSCDVRSNPEPTGYDWSTTSGTFPTSAVAQGSQLVIHAVDSLFNTTFVCTVTNAVGMGRAEQVIFVRETPNTAGAGATGGIIGGIIAAIIATAVAATGILICRQQRKEQTLQGAEEDEDLEGPPSYKPPTPKAKLEAQEMPSQLFTLGASEHSPLKTPYFDAGASCTEQEMPRYHELPTLEERSGPLHPGATSLGSPIPVPPGPPAVEDVSLDLEDEEGEEEEEYLDKINPIYDALSYSSPSDSYQGKGFVMSRAMYV.

A signal peptide spans 1–31 (MARAAALLPSRSPPTPLLWPLLLLLLLETGA). Positions 32–156 (QDVRVQVLPE…KGSVRGMTWL (125 aa)) constitute an Ig-like V-type domain. Over 32-360 (QDVRVQVLPE…NTAGAGATGG (329 aa)) the chain is Extracellular. 3 disulfides stabilise this stretch: Cys-54–Cys-140, Cys-183–Cys-238, and Cys-283–Cys-329. An N-linked (GlcNAc...) asparagine glycan is attached at Asn-137. 2 Ig-like C2-type domains span residues 162 to 256 (PKNQ…VTLS) and 261 to 345 (PEVS…QVIF). Residue Asn-324 is glycosylated (N-linked (GlcNAc...) asparagine). The chain crosses the membrane as a helical span at residues 361 to 381 (IIGGIIAAIIATAVAATGILI). At 382–538 (CRQQRKEQTL…GFVMSRAMYV (157 aa)) the chain is on the cytoplasmic side. Residues 390-414 (TLQGAEEDEDLEGPPSYKPPTPKAK) form a disordered region. Residue Thr-410 is modified to Phosphothreonine. Phosphoserine occurs at positions 433, 465, and 470. A disordered region spans residues 462–489 (ERSGPLHPGATSLGSPIPVPPGPPAVED).

The protein belongs to the nectin family. Can form trans-heterodimers with NECTIN3. Interacts with CD226 or with PVRIG; these interactions are competitive and have a differential functional outcome on T-cell activation, either positive or negative, respectively. Binds with low affinity to TIGIT. In terms of assembly, (Microbial infection) Interacts with herpes simplex virus 1 (HHV-1) mutant Rid1, herpes simplex virus 1 (HHV-2) and pseudorabies virus (PRV) envelope glycoprotein D. As to expression, ubiquitous.

It is found in the cell membrane. Functionally, modulator of T-cell signaling. Can be either a costimulator of T-cell function, or a coinhibitor, depending on the receptor it binds to. Upon binding to CD226, stimulates T-cell proliferation and cytokine production, including that of IL2, IL5, IL10, IL13, and IFNG. Upon interaction with PVRIG, inhibits T-cell proliferation. These interactions are competitive. Probable cell adhesion protein. (Microbial infection) Acts as a receptor for herpes simplex virus 1 (HHV-1) mutant Rid1, herpes simplex virus 1 (HHV-2) and pseudorabies virus (PRV). This chain is Nectin-2, found in Homo sapiens (Human).